A 1009-amino-acid chain; its full sequence is Anillin-like protein 2 (1009 aa).

3 disordered regions span residues 1 to 29 (MYRR…DSNR), 272 to 295 (FGQE…QTIV), and 539 to 558 (GTGY…PTLV). Residues 542 to 557 (YSASSSGPQFTRSPTL) show a composition bias toward polar residues. Residues 626–657 (SAADKINDSKRQISKLIETIEKTRKHIQLAEI) adopt a coiled-coil conformation. Positions 892-1005 (DVEYRGFLYL…WLNAINDTLF (114 aa)) constitute a PH domain.

Localizes to the surface of the rachis.

Required to maintain the structure of the rachis, the central cytoplasmic core of the syncytial adult gonad. Failure to maintain the rachis leads to premature dissociation of oocytes and thereby impedes oogenesis. This is Anillin-like protein 2 (ani-2) from Caenorhabditis elegans.